We begin with the raw amino-acid sequence, 116 residues long: Ribonuclease P protein component (116 aa).

The protein belongs to the RnpA family. In terms of assembly, consists of a catalytic RNA component (M1 or rnpB) and a protein subunit.

It carries out the reaction Endonucleolytic cleavage of RNA, removing 5'-extranucleotides from tRNA precursor.. RNaseP catalyzes the removal of the 5'-leader sequence from pre-tRNA to produce the mature 5'-terminus. It can also cleave other RNA substrates such as 4.5S RNA. The protein component plays an auxiliary but essential role in vivo by binding to the 5'-leader sequence and broadening the substrate specificity of the ribozyme. The sequence is that of Ribonuclease P protein component from Geobacillus sp. (strain WCH70).